The following is an 87-amino-acid chain: Bradykinin-potentiating peptide NDBP12 (87 aa).

The N-terminal stretch at 1–22 (MNKRVLLVIFFVTLLVADEVNS) is a signal peptide. Residues 64–75 (PAEAPAPAAAAP) show a composition bias toward low complexity. Positions 64–87 (PAEAPAPAAAAPEEPPVEQRRRRR) are disordered.

This sequence belongs to the non-disulfide-bridged peptide (NDBP) superfamily. Long chain multifunctional peptide (group 2) family. In terms of tissue distribution, expressed by the venom gland.

Its subcellular location is the secreted. Inhibits angiotensin-converting enzyme (ACE), but does not serve as substrate for the enzyme. Potentiates bradykinin (BK) on the isolated guinea pig ileum as well as the isolated rat uterus for contraction. Also potentiates in vivo the depressor effect of BK on arterial blood pressure in the normotensive anesthetized rat. This Lychas mucronatus (Chinese swimming scorpion) protein is Bradykinin-potentiating peptide NDBP12.